A 1147-amino-acid polypeptide reads, in one-letter code: Protein lin-41 (1147 aa).

Positions 1–93 (MATIVPCSLE…PPSMIQSPQQ (93 aa)) are disordered. The span at 33 to 47 (SGNELSMGGSSSEGD) shows a compositional bias: low complexity. The segment covering 48–65 (SMSHHRGEHSPNHHHQDN) has biased composition (basic and acidic residues). Residues 84–93 (PPSMIQSPQQ) are compositionally biased toward low complexity. Residues 114 to 155 (CSVCSKSSTIGVLPFVCAHKTCQSCYQMTPSSYDRRACKLCG) form an RING-type zinc finger. A B box-type; atypical zinc finger spans residues 366 to 412 (MGPIQCQGCESKISFAYCMQCQEALCIHCVQAHQRVRATKQHAFVEL). Zn(2+)-binding residues include Cys-371, Cys-374, Cys-394, and His-398. The stretch at 565–618 (AFDTHVNALEERRKELLKRVETVKNLKLSVLISQAESLQSKQIDLQQAIQTATK) forms a coiled coil. Residues 723 to 817 (ACGDLLSSSI…ISGCPTTMDI (95 aa)) form a Filamin repeat. NHL repeat units lie at residues 832–875 (ILTF…FDKD), 879–922 (ISKF…FDEN), 926–969 (LLKF…FTPQ), 974–1017 (RKCG…LSPR), 1022–1065 (MKVY…FASD), and 1107–1147 (SAPT…IRVF). The tract at residues 1104–1123 (AFSSAPTPLTPSPRQLLDRP) is disordered.

Belongs to the TRIM/RBCC family.

It is found in the cytoplasm. The protein resides in the P-body. Its function is as follows. Heterochronic protein which acts downstream of let-7 in temporal patterning. Plays a role in the developmental timing of postembryonic hypodermal seam cell division and fusion events and adult alae production. Represses lin-29 during late larval stages, which prevents terminal differentiation of hypodermal seam cells and promotes their division. Involved in post-transcriptional gene regulation, uses two independent pathways. Has direct and specific RNA-binding activity and, depending on the location (5'UTR or 3'UTR) of the target site, triggers either mRNA decay or repression of translation. Degrades the mRNA of transcription factor dmd-3 to govern the timing and extent of male tail tip morphogenesis. Plays a role in the sexual maturation of the nervous system. The sequence is that of Protein lin-41 from Caenorhabditis elegans.